Reading from the N-terminus, the 365-residue chain is Mitogen-activated protein kinase 13 (365 aa).

The 284-residue stretch at 25–308 (YVSPTHVGSG…AAQALTHPFF (284 aa)) folds into the Protein kinase domain. Residue 31 to 39 (VGSGAYGSV) coordinates ATP. Serine 47 is modified (phosphoserine). Lysine 54 contacts ATP. Aspartate 150 (proton acceptor) is an active-site residue. Phosphothreonine; by MAP2K3, MAP2K4, MAP2K6 and MAP2K7 is present on threonine 180. The short motif at 180-182 (TGY) is the TXY element. A Phosphotyrosine; by MAP2K3, MAP2K4, MAP2K6 and MAP2K7 modification is found at tyrosine 182. Serine 350 bears the Phosphoserine mark.

Belongs to the protein kinase superfamily. CMGC Ser/Thr protein kinase family. MAP kinase subfamily. As to quaternary structure, interacts with MAPK8IP2. Mg(2+) serves as cofactor. Dually phosphorylated on Thr-180 and Tyr-182 by MAP2K3/MKK3, MAP2K4/MKK4, MAP2K6/MKK6 and MAP2K7/MKK7, which activates the enzyme. Dephosphorylated by dual specificity phosphatase DUSP1.

It carries out the reaction L-seryl-[protein] + ATP = O-phospho-L-seryl-[protein] + ADP + H(+). The enzyme catalyses L-threonyl-[protein] + ATP = O-phospho-L-threonyl-[protein] + ADP + H(+). Activated by phosphorylation on threonine and tyrosine by dual specificity kinases, MAP2K3/MKK3, MAP2K6/MKK6, MAP2K4/MKK4 and MAP2K7/MKK7. Activation by ultraviolet radiation, hyperosmotic shock, anisomycin or by TNF-alpha is mediated by MAP2K3/MKK3. Inhibited by dual specificity phosphatase DUSP1. Its function is as follows. Serine/threonine kinase which acts as an essential component of the MAP kinase signal transduction pathway. MAPK13 is one of the four p38 MAPKs which play an important role in the cascades of cellular responses evoked by extracellular stimuli such as pro-inflammatory cytokines or physical stress leading to direct activation of transcription factors such as ELK1 and ATF2. Accordingly, p38 MAPKs phosphorylate a broad range of proteins and it has been estimated that they may have approximately 200 to 300 substrates each. MAPK13 is one of the less studied p38 MAPK isoforms. Some of the targets are downstream kinases such as MAPKAPK2, which are activated through phosphorylation and further phosphorylate additional targets. Plays a role in the regulation of protein translation by phosphorylating and inactivating EEF2K. Involved in cytoskeletal remodeling through phosphorylation of MAPT and STMN1. Mediates UV irradiation induced up-regulation of the gene expression of CXCL14. Plays an important role in the regulation of epidermal keratinocyte differentiation, apoptosis and skin tumor development. Phosphorylates the transcriptional activator MYB in response to stress which leads to rapid MYB degradation via a proteasome-dependent pathway. MAPK13 also phosphorylates and down-regulates PRKD1 during regulation of insulin secretion in pancreatic beta cells. This is Mitogen-activated protein kinase 13 (MAPK13) from Pan troglodytes (Chimpanzee).